The chain runs to 225 residues: UPF0758 protein Bpet3149 (225 aa).

The MPN domain maps to 103 to 225 (AMSEPGSVKR…VVSMAELGLL (123 aa)). The Zn(2+) site is built by His-174, His-176, and Asp-187. The JAMM motif motif lies at 174–187 (HNHPSGSAQPSQAD).

It belongs to the UPF0758 family.

The polypeptide is UPF0758 protein Bpet3149 (Bordetella petrii (strain ATCC BAA-461 / DSM 12804 / CCUG 43448)).